We begin with the raw amino-acid sequence, 60 residues long: Short neurotoxin C (60 aa).

Disulfide bonds link C3-C22, C17-C39, C41-C52, and C53-C58.

This sequence belongs to the three-finger toxin family. Short-chain subfamily. Type I alpha-neurotoxin sub-subfamily. Expressed by the venom gland.

Its subcellular location is the secreted. Functionally, binds to muscle nicotinic acetylcholine receptor (nAChR) and inhibit acetylcholine from binding to the receptor, thereby impairing neuromuscular transmission. The polypeptide is Short neurotoxin C (Aipysurus laevis (Olive sea snake)).